Here is a 547-residue protein sequence, read N- to C-terminus: Rho GTPase-activating protein 36 (547 aa).

An N-terminal signal peptide occupies residues 1–40; it reads MGGCIPFLKAARALCPRIMPPLLLLSAFIFLVSVLGGAPG. One can recognise a Rho-GAP domain in the interval 226-426; it reads MSLNPIAKQI…AMIDNWDVLF (201 aa). The tract at residues 485–547 is disordered; sequence AVLAQSKPSD…AKTGVSYFFP (63 aa). Residues 524–539 are compositionally biased toward basic and acidic residues; it reads EQDRPLLRVPREKEAK.

May interacts (via the Rho-GAP domain) with the active form of RAC1. Detected in the outer root sheath of hair follicles at the level of the stem cell bulge, during the anagen and telogen phases of hair growth (at protein level).

Its function is as follows. GTPase activator for the Rho-type GTPases by converting them to an inactive GDP-bound state. This chain is Rho GTPase-activating protein 36 (ARHGAP36), found in Homo sapiens (Human).